A 377-amino-acid polypeptide reads, in one-letter code: Chaperone protein DnaJ (377 aa).

Residues 5–70 (DYYQVLGVSR…KKRSAYDQLG (66 aa)) form the J domain. The CR-type zinc-finger motif lies at 138–216 (GVTKIISFKT…CYGEGRYINT (79 aa)). Residues Cys-151, Cys-154, Cys-168, Cys-171, Cys-190, Cys-193, Cys-204, and Cys-207 each contribute to the Zn(2+) site. CXXCXGXG motif repeat units lie at residues 151–158 (CDACAGKG), 168–175 (CPTCRGSG), 190–197 (CQTCRGAG), and 204–211 (CTKCYGEG).

Belongs to the DnaJ family. As to quaternary structure, homodimer. Requires Zn(2+) as cofactor.

It is found in the cytoplasm. In terms of biological role, participates actively in the response to hyperosmotic and heat shock by preventing the aggregation of stress-denatured proteins and by disaggregating proteins, also in an autonomous, DnaK-independent fashion. Unfolded proteins bind initially to DnaJ; upon interaction with the DnaJ-bound protein, DnaK hydrolyzes its bound ATP, resulting in the formation of a stable complex. GrpE releases ADP from DnaK; ATP binding to DnaK triggers the release of the substrate protein, thus completing the reaction cycle. Several rounds of ATP-dependent interactions between DnaJ, DnaK and GrpE are required for fully efficient folding. Also involved, together with DnaK and GrpE, in the DNA replication of plasmids through activation of initiation proteins. The sequence is that of Chaperone protein DnaJ from Orientia tsutsugamushi (strain Boryong) (Rickettsia tsutsugamushi).